The sequence spans 837 residues: Zinc fingers and homeoboxes protein 2 (837 aa).

The interval 27 to 77 (VDRAKEKGIGTPQPDVAKDSWAAELENSSKENEVIEVKSMGESQSKKLQGG) is interaction with EFNB1. Thr-37 is modified (phosphothreonine). Residue Lys-64 forms a Glycyl lysine isopeptide (Lys-Gly) (interchain with G-Cter in SUMO2) linkage. C2H2-type zinc fingers lie at residues 78-101 (YECK…DMQH) and 110-133 (YVCA…SKFH). A compositionally biased stretch (low complexity) spans 164 to 180 (SITTSGPGTGDSDSGIS). Residues 164–204 (SITTSGPGTGDSDSGISVSKTPIMKPGKPKADAKKVPKKPE) form a disordered region. Basic and acidic residues predominate over residues 192-204 (PKADAKKVPKKPE). The tract at residues 195-358 (DAKKVPKKPE…PAQLAPTKVT (164 aa)) is required for homodimerization. A Phosphothreonine modification is found at Thr-207. DNA-binding regions (homeobox) lie at residues 263-324 (NTTK…WSPE), 439-501 (TPAS…IVHI), 530-591 (PQKF…EQAV), and 628-690 (SPSP…TVKW). A required for repressor activity region spans residues 263-446 (NTTKYNSALD…PLTPASDRKK (184 aa)). A required for interaction with NFYA region spans residues 263-497 (NTTKYNSALD…SDHRYRCQRG (235 aa)). The interval 317–446 (HGISWSPEEV…PLTPASDRKK (130 aa)) is required for nuclear localization. The tract at residues 404–445 (GQKRPLVTPQAAPEPKRPHIAQVPEPPPKVANPPLTPASDRK) is disordered. Residues 427–439 (PEPPPKVANPPLT) are compositionally biased toward pro residues. A Glycyl lysine isopeptide (Lys-Gly) (interchain with G-Cter in SUMO2) cross-link involves residue Lys-455. The disordered stretch occupies residues 755-837 (PAKDCLPAKP…DCVPAEAGQA (83 aa)). Phosphoserine occurs at positions 825 and 827.

This sequence belongs to the ZHX family. As to quaternary structure, homodimer (via homeobox domain). Heterodimer with ZHX1 (via homeobox domain 1). Heterodimer with ZHX3 (via homeobox domain 1). Heterodimerization with ZHX1 is not necessary for repressor activity. Interacts (via homeobox domain) with NFYA (via N-terminus). Interacts with EFNB1 intracellular domain peptide; the interaction enhances ZHX2 transcriptional repression activity. In terms of tissue distribution, ubiquitously expressed. Expressed in podocytes.

It is found in the nucleus. Functionally, acts as a transcriptional repressor. Represses the promoter activity of the CDC25C gene stimulated by NFYA. May play a role in retinal development where it regulates the composition of bipolar cell populations, by promoting differentiation of bipolar OFF-type cells. In the brain, may promote maintenance and suppress differentiation of neural progenitor cells in the developing cortex. This is Zinc fingers and homeoboxes protein 2 (ZHX2) from Homo sapiens (Human).